We begin with the raw amino-acid sequence, 212 residues long: Thiamine-phosphate synthase (212 aa).

A 4-amino-2-methyl-5-(diphosphooxymethyl)pyrimidine-binding site is contributed by 38 to 42 (QLREK). Residues Asp71 and Asp90 each coordinate Mg(2+). Lys138 lines the 4-amino-2-methyl-5-(diphosphooxymethyl)pyrimidine pocket. Gly166 serves as a coordination point for 2-[(2R,5Z)-2-carboxy-4-methylthiazol-5(2H)-ylidene]ethyl phosphate.

Belongs to the thiamine-phosphate synthase family. It depends on Mg(2+) as a cofactor.

It carries out the reaction 2-[(2R,5Z)-2-carboxy-4-methylthiazol-5(2H)-ylidene]ethyl phosphate + 4-amino-2-methyl-5-(diphosphooxymethyl)pyrimidine + 2 H(+) = thiamine phosphate + CO2 + diphosphate. The enzyme catalyses 2-(2-carboxy-4-methylthiazol-5-yl)ethyl phosphate + 4-amino-2-methyl-5-(diphosphooxymethyl)pyrimidine + 2 H(+) = thiamine phosphate + CO2 + diphosphate. The catalysed reaction is 4-methyl-5-(2-phosphooxyethyl)-thiazole + 4-amino-2-methyl-5-(diphosphooxymethyl)pyrimidine + H(+) = thiamine phosphate + diphosphate. It functions in the pathway cofactor biosynthesis; thiamine diphosphate biosynthesis; thiamine phosphate from 4-amino-2-methyl-5-diphosphomethylpyrimidine and 4-methyl-5-(2-phosphoethyl)-thiazole: step 1/1. Functionally, condenses 4-methyl-5-(beta-hydroxyethyl)thiazole monophosphate (THZ-P) and 2-methyl-4-amino-5-hydroxymethyl pyrimidine pyrophosphate (HMP-PP) to form thiamine monophosphate (TMP). The chain is Thiamine-phosphate synthase from Chlamydia abortus (strain DSM 27085 / S26/3) (Chlamydophila abortus).